The primary structure comprises 559 residues: MAAVGANATLLTNTKSTVEPVRPLANFPPSVWGDMFLSFSLDNSKMEEYAKAMEKPKQEVRRLILDPTMDSNKKLSLIYVVHRLGLTYMFLKEIEGQLDRLFEEFNLEDYVDVDLHTISINFQAFRHLGYKLPCDVFNKFKNNDSNAFKESIASDVRGLLGLYESAQLRVKGEKILDDASAFAETKLKSLVNTLEGSLAQQVKQALKRPFHQGMPMVEARLYFTNYQEEFSKYDSLLKLAKLHFNYLQLQQKEELRIVSKWWKDMRFQETTPYIRDRVPEIYLWILGLYFEPKYSLARIIATKITLFLVVLDDTYDAYGTLEELRLLTHAINRWDMRAMSDIPEYIRPFYKILLDEYAELEKQLAKEGRLKSVIASKEAFQDIARGYIEEAEWTNSGYVASFPEYMKNGLITSAYNVISKSALVGMGEVVSADALAWYESHPKILQASELISRLQDDVMTYQFERERGQSATGVDSYIKTYGVSEKEAIEELKKMIENAWKDINEGCLKPREVSMDLLAPILNLARMIDVVYRYDDGFTFPGKTLKEYITLLFVDSLPM.

(2E,6E)-farnesyl diphosphate-binding residues include arginine 275, aspartate 312, aspartate 316, arginine 453, and aspartate 456. Positions 312 and 316 each coordinate Mg(2+). The short motif at 312–316 is the DDXXD motif element; sequence DDTYD. 3 residues coordinate Mg(2+): aspartate 456, threonine 460, and glutamate 464.

Belongs to the terpene synthase family. Tpsa subfamily. In terms of assembly, monomer. Mg(2+) serves as cofactor. As to expression, highly expressed in glandular trichomes. Expressed in roots and leaves.

Its subcellular location is the cytoplasm. The enzyme catalyses (2E,6E)-farnesyl diphosphate = (+)-(R)-germacrene A + diphosphate. The protein operates within secondary metabolite biosynthesis; terpenoid biosynthesis. Sesquiterpene synthase involved in the biosynthesis of volatile compounds. Mediates the conversion of (2E,6E)-farnesyl diphosphate (FPP) into (+)-(R)-germacrene A. This is Sesquiterpene synthase TPS3 from Xanthium strumarium (Rough cocklebur).